A 261-amino-acid polypeptide reads, in one-letter code: uncharacterized protein (261 aa).

Residues 1-22 form the signal peptide; it reads MRDSKRVVLYISIMVLSIFIIG. C23 carries the N-palmitoyl cysteine lipid modification. Residue C23 is the site of S-diacylglycerol cysteine attachment.

The protein belongs to the staphylococcal tandem lipoprotein family.

It localises to the cell membrane. This is an uncharacterized protein from Staphylococcus aureus (strain N315).